The following is a 95-amino-acid chain: Large ribosomal subunit protein uL23 (95 aa).

The protein belongs to the universal ribosomal protein uL23 family. Part of the 50S ribosomal subunit. Contacts protein L29, and trigger factor when it is bound to the ribosome.

In terms of biological role, one of the early assembly proteins it binds 23S rRNA. One of the proteins that surrounds the polypeptide exit tunnel on the outside of the ribosome. Forms the main docking site for trigger factor binding to the ribosome. The sequence is that of Large ribosomal subunit protein uL23 from Desulfatibacillum aliphaticivorans.